Reading from the N-terminus, the 277-residue chain is Shikimate dehydrogenase (NADP(+)) (277 aa).

Residues 19 to 21 (SKS) and Thr-66 each bind shikimate. The active-site Proton acceptor is the Lys-70. Residue Asp-82 coordinates NADP(+). Shikimate is bound by residues Asn-91 and Asp-107. NADP(+) contacts are provided by residues 133–137 (GAGGA), 157–162 (NRTRAR), and Leu-222. Tyr-224 is a shikimate binding site. An NADP(+)-binding site is contributed by Gly-245.

The protein belongs to the shikimate dehydrogenase family. In terms of assembly, homodimer.

It catalyses the reaction shikimate + NADP(+) = 3-dehydroshikimate + NADPH + H(+). It functions in the pathway metabolic intermediate biosynthesis; chorismate biosynthesis; chorismate from D-erythrose 4-phosphate and phosphoenolpyruvate: step 4/7. Its function is as follows. Involved in the biosynthesis of the chorismate, which leads to the biosynthesis of aromatic amino acids. Catalyzes the reversible NADPH linked reduction of 3-dehydroshikimate (DHSA) to yield shikimate (SA). The chain is Shikimate dehydrogenase (NADP(+)) from Roseobacter denitrificans (strain ATCC 33942 / OCh 114) (Erythrobacter sp. (strain OCh 114)).